Reading from the N-terminus, the 231-residue chain is Type 3 secretion system stator protein (231 aa).

In terms of assembly, the core secretion machinery of the T3SS is composed of approximately 20 different proteins, including cytoplasmic components, a base, an export apparatus and a needle. This subunit is part of the cytosolic complex. Interacts directly with Spa47/SctN (T3SS ATPase) and Spa33/SctQ (the major sorting platform component). Homodimer in solution.

Its subcellular location is the cytoplasm. In terms of biological role, component of the type III secretion system (T3SS), also called injectisome, which is used to inject bacterial effector proteins into eukaryotic host cells. Acts as a regulator of the Spa47/SctN ATPase activity. It down-regulates the ATPase activity of the oligomeric Spa47/SctN, while it up-regulates the activity of the monomeric form. Important for translocation of MxiH/SctF, the major needle component. This chain is Type 3 secretion system stator protein, found in Shigella flexneri.